The chain runs to 103 residues: Small ribosomal subunit protein uS10 (103 aa).

This sequence belongs to the universal ribosomal protein uS10 family. In terms of assembly, part of the 30S ribosomal subunit.

Its function is as follows. Involved in the binding of tRNA to the ribosomes. This Xylella fastidiosa (strain M12) protein is Small ribosomal subunit protein uS10.